Here is a 738-residue protein sequence, read N- to C-terminus: Pentatricopeptide repeat-containing protein At5g65570 (738 aa).

PPR repeat units follow at residues 98 to 128, 129 to 163, 164 to 198, 200 to 230, 231 to 265, 266 to 300, 301 to 331, 332 to 366, 367 to 401, 402 to 432, 433 to 467, 468 to 502, and 503 to 537; these read AEIS…MSER, HIVT…NVLP, DEYT…GLEV, NVFV…VEEK, DVVL…KVQP, NEYT…GFES, ALAS…IEYP, NQVS…SIKP, NSFT…GFDR, DKYA…LSEV, DVIS…GLQP, NDVT…KIML, and TNDH…DLVL. Residues 537 to 612 are type E motif; sequence LWRTLLSACK…NPAMSWVEIN (76 aa). Residues 613-644 are type E(+) motif; that stretch reads KETHTFMAGDLFSHPNSEQILENLEELIKKSK. A type DYW motif region spans residues 645-738; sequence DLGYVEDKSC…DGSCSCGDYW (94 aa).

This sequence belongs to the PPR family. PCMP-H subfamily.

This Arabidopsis thaliana (Mouse-ear cress) protein is Pentatricopeptide repeat-containing protein At5g65570 (PCMP-H47).